The sequence spans 430 residues: Histidine--tRNA ligase (430 aa).

It belongs to the class-II aminoacyl-tRNA synthetase family.

Its subcellular location is the cytoplasm. The enzyme catalyses tRNA(His) + L-histidine + ATP = L-histidyl-tRNA(His) + AMP + diphosphate + H(+). The chain is Histidine--tRNA ligase from Metallosphaera sedula (strain ATCC 51363 / DSM 5348 / JCM 9185 / NBRC 15509 / TH2).